Consider the following 853-residue polypeptide: Bromodomain-containing protein bet-1 (853 aa).

Over residues 1-19 the composition is skewed to polar residues; sequence MSEGSGDQSQQRPWASPRQ. Disordered regions lie at residues 1-22 and 141-245; these read MSEG…QQPI and SLEQ…LRAK. Residues 39–145 enclose the Bromo 1 domain; it reads RHTNKLDYIM…EVIKKSLEQA (107 aa). Over residues 141–153 the composition is skewed to basic and acidic residues; that stretch reads SLEQAPREEHDMD. 2 stretches are compositionally biased toward low complexity: residues 166-175 and 192-215; these read SDGGSKSSSS and SEVS…SVAA. Residue Lys252 forms a Glycyl lysine isopeptide (Lys-Gly) (interchain with G-Cter in SUMO) linkage. A Bromo 2 domain is found at 257 to 366; that stretch reads QPLLPSMKPC…EVFDRRWAEL (110 aa). Over residues 369–381 the composition is skewed to low complexity; sequence SSSRASSVAPQSA. Residues 369–418 are disordered; that stretch reads SSSRASSVAPQSAPIAPTPKVAKSSAPKEPKESRKEHKKETTFEASGAKS. Basic and acidic residues predominate over residues 394-410; that stretch reads APKEPKESRKEHKKETT. A coiled-coil region spans residues 419-458; that stretch reads EDLMQINNALSMIREREEKLKAELAAAQAIKDKLTSVKNR. An NET domain is found at 516 to 601; it reads DSDDEDNKMA…TIPTLNGNGD (86 aa). Disordered stretches follow at residues 594–814 and 819–838; these read PTLN…DEQT and MRME…VSLS. A compositionally biased stretch (low complexity) spans 612 to 624; it reads TSSGATGSKGSSS. Over residues 684 to 696 the composition is skewed to polar residues; sequence QPPSTSREWNQSS. The span at 708–736 shows a compositional bias: low complexity; it reads QPPMSRVPASSSTSVSAIGKNNAAASSNS. Polar residues predominate over residues 786–807; that stretch reads QFFQSQPTTSATIRSPTESQPG. Positions 819–832 are enriched in basic and acidic residues; the sequence is MRMEAKRARQKEDE.

This sequence belongs to the BET family. In terms of assembly, interacts with acetylated histone H4. Interacts (via BROMO domain 2) with smo-1 and ubc-9. In terms of tissue distribution, expressed in T-cells, Q-cells, V5-cells and their descendants such as somatic gonad and syncytium.

It is found in the nucleus. The protein resides in the chromosome. Its function is as follows. Required for the establishment and maintenance of stable cell fate in several lineages including V5.pa, T, Z1/Z4 and QR lineages probably by repressing the expression of cell fate determinants. Required to maintain non-distal tip cell (DTC) fate of somatic gonadal cells through the htz-1-mediated repression of transcription factor ceh-22. Regulates the subnuclear localization of histone variant htz-1 in somatic gonadal cells. Plays a role in the attenuation of the let-60/ras pathway, probably by preventing expression of activators of the pathway. Involved in adult locomotion. Acts together with the sumoylation pathway to prevent muscle myosin depletion in aging adults probably by preventing myoblast growth factor receptor egl-15 overexpression. May play a role in vulva development. In Caenorhabditis elegans, this protein is Bromodomain-containing protein bet-1.